Reading from the N-terminus, the 259-residue chain is 4-hydroxy-tetrahydrodipicolinate reductase (259 aa).

Gly-9–Met-14 serves as a coordination point for NAD(+). Arg-37 lines the NADP(+) pocket. Residues Gly-92–Thr-94 and Ala-116–Met-119 each bind NAD(+). The Proton donor/acceptor role is filled by His-149. Residue His-150 participates in (S)-2,3,4,5-tetrahydrodipicolinate binding. Lys-153 acts as the Proton donor in catalysis. A (S)-2,3,4,5-tetrahydrodipicolinate-binding site is contributed by Gly-159 to Thr-160.

Belongs to the DapB family.

The protein localises to the cytoplasm. It carries out the reaction (S)-2,3,4,5-tetrahydrodipicolinate + NAD(+) + H2O = (2S,4S)-4-hydroxy-2,3,4,5-tetrahydrodipicolinate + NADH + H(+). It catalyses the reaction (S)-2,3,4,5-tetrahydrodipicolinate + NADP(+) + H2O = (2S,4S)-4-hydroxy-2,3,4,5-tetrahydrodipicolinate + NADPH + H(+). Its pathway is amino-acid biosynthesis; L-lysine biosynthesis via DAP pathway; (S)-tetrahydrodipicolinate from L-aspartate: step 4/4. In terms of biological role, catalyzes the conversion of 4-hydroxy-tetrahydrodipicolinate (HTPA) to tetrahydrodipicolinate. In Desulfovibrio desulfuricans (strain ATCC 27774 / DSM 6949 / MB), this protein is 4-hydroxy-tetrahydrodipicolinate reductase.